The sequence spans 49 residues: Large ribosomal subunit protein bL33 (49 aa).

It belongs to the bacterial ribosomal protein bL33 family.

In Desulfitobacterium hafniense (strain Y51), this protein is Large ribosomal subunit protein bL33.